A 274-amino-acid polypeptide reads, in one-letter code: Diaminopimelate epimerase (274 aa).

Substrate-binding residues include asparagine 11, glutamine 44, and asparagine 64. Cysteine 73 serves as the catalytic Proton donor. Substrate contacts are provided by residues 74–75, asparagine 157, asparagine 190, and 208–209; these read GN and ER. Cysteine 217 functions as the Proton acceptor in the catalytic mechanism. A substrate-binding site is contributed by 218–219; that stretch reads GS.

It belongs to the diaminopimelate epimerase family. Homodimer.

The protein localises to the cytoplasm. The enzyme catalyses (2S,6S)-2,6-diaminopimelate = meso-2,6-diaminopimelate. It functions in the pathway amino-acid biosynthesis; L-lysine biosynthesis via DAP pathway; DL-2,6-diaminopimelate from LL-2,6-diaminopimelate: step 1/1. Functionally, catalyzes the stereoinversion of LL-2,6-diaminopimelate (L,L-DAP) to meso-diaminopimelate (meso-DAP), a precursor of L-lysine and an essential component of the bacterial peptidoglycan. The chain is Diaminopimelate epimerase from Histophilus somni (strain 129Pt) (Haemophilus somnus).